A 579-amino-acid polypeptide reads, in one-letter code: Suppressor of cytokine signaling 7 (579 aa).

Disordered regions lie at residues M1 to E25, P89 to S270, and Q295 to S315. Composition is skewed to pro residues over residues P89–A99, P155–F165, and Q185–L196. Residues A124 to R492 form a mediates interaction with SORBS3 region. Residues G206 to R217 are compositionally biased toward basic residues. Residues P301 to R311 are compositionally biased toward pro residues. The region spanning W398–V507 is the SH2 domain. One can recognise an SOCS box domain in the interval Q502–Y552.

As to quaternary structure, substrate-recognition component of the ECS(SOCS7) complex, composed of SOCS7, CUL5, ELOB, ELOC and RNF7/RBX2. Interacts, via the third proline-rich region, with the second SH3 domain of the adapter protein NCK1. Also interacts with GRB2, INSR, PLCG1, SORBS3/vinexin, and phosphorylated STAT3 and STAT5. Interacts with SEPT6. Interacts with phosphorylated IRS4 and PIK3R1. As to expression, widely expressed with higher expression in brain and testis where it is expressed by spermatocytes and early spermatids. Also significantly expressed in spleen, skeletal muscle and kidney.

The protein resides in the cytoplasm. The protein localises to the nucleus. Its subcellular location is the cell membrane. Its pathway is protein modification; protein ubiquitination. Substrate-recognition component of a cullin-5-RING E3 ubiquitin-protein ligase complex (ECS complex, also named CRL5 complex), which mediates the ubiquitination and subsequent proteasomal degradation of target proteins, such as DAB1 and IRS1. Specifically recognizes and binds phosphorylated proteins via its SH2 domain, promoting their ubiquitination. The ECS(SOCS7) complex acts as a key regulator of reelin signaling by mediating ubiquitination and degradation of phosphorylated DAB1 in the cortical plate of the developing cerebral cortex, thereby regulating neuron positioning during cortex development. Functions in insulin signaling and glucose homeostasis through IRS1 ubiquitination and subsequent proteasomal degradation. Also inhibits prolactin, growth hormone and leptin signaling by preventing STAT3 and STAT5 activation, sequestering them in the cytoplasm and reducing their binding to DNA. This is Suppressor of cytokine signaling 7 from Mus musculus (Mouse).